Reading from the N-terminus, the 863-residue chain is MDAALGPPDAMAASEGDLTPMMSQYFELTRRYDDALVLFQVGDFYELFCAAAETAARICEVTLTAREDSTGQYPMAGVPIDTAEPYIEALLDAGYRVAVADQVQDPDEVSGVVDRAVTRVVTPGTVTEDELLGGADNNFVAALAGGRDADAGFGLALLDVSTGDCYATRLGDEARVRDELGRFTPAELVVGPGVDADRFADEAFVAAYDDDAFEPAAARERVADYFGGEDVLPTTAELRACGALLSYAEYTRGGAGDSQRLTYLNHVTRYSPTEHLQMDAVALRSLELFEQRSVHGTDGTALVDVLDETACALGRRKLTDWLRRPLVDSDAIAARHDAVGELVADPLSREELHEHLRDVYDIERLVSRVSRGRANARDLRALADTLAVVPEVRGLLADADARKLQSLREALDDLPEIRGLLDRAIVADPPQELTDGGVIRDGYDERLDDLRATERAGKQWVDDLEASERERTGVDSLKVGQNSVHGYYIEVTKANMDAVPEDYQRRQTLKNAERYVTPELKEREEEIVRAEQRAQDLEYELFVGIRERVAEAAERMQAVARALAAVDALASFAAVAAAHDYTKPVMGGDGIHIEGGRHPVVERTESGFVPNDTTLNDDRRVAVITGPNMSGKSTYMRQVAVIVVLAQAGCFVPAAAAELRVVDRVFTRVGASDDIAGGRSTFMVEMTELASILRAATDESLVLLDEVGRGTATTDGLAIARAVTEHIHDAVGATTLFATHHHELTADADRLPDALNLHFAATRGDDGVAFEHAVRAGAATASYGVEVARTAGVPEPVVDRARELLDAPATADGGDGGTTPTADANGQRGAAAGIVAELRDVSVAELTPIEALNVLNDLASRVD.

Residue 626–633 (GPNMSGKS) coordinates ATP.

It belongs to the DNA mismatch repair MutS family.

Functionally, this protein is involved in the repair of mismatches in DNA. It is possible that it carries out the mismatch recognition step. This protein has a weak ATPase activity. In Halobacterium salinarum (strain ATCC 700922 / JCM 11081 / NRC-1) (Halobacterium halobium), this protein is DNA mismatch repair protein MutS 2 (mutS2).